Consider the following 308-residue polypeptide: Aspartate carbamoyltransferase catalytic subunit (308 aa).

Positions 57 and 58 each coordinate carbamoyl phosphate. K86 is an L-aspartate binding site. Residues R107, H135, and Q138 each coordinate carbamoyl phosphate. The L-aspartate site is built by R167 and R228. Carbamoyl phosphate contacts are provided by L267 and P268.

This sequence belongs to the aspartate/ornithine carbamoyltransferase superfamily. ATCase family. As to quaternary structure, heterooligomer of catalytic and regulatory chains.

The enzyme catalyses carbamoyl phosphate + L-aspartate = N-carbamoyl-L-aspartate + phosphate + H(+). The protein operates within pyrimidine metabolism; UMP biosynthesis via de novo pathway; (S)-dihydroorotate from bicarbonate: step 2/3. In terms of biological role, catalyzes the condensation of carbamoyl phosphate and aspartate to form carbamoyl aspartate and inorganic phosphate, the committed step in the de novo pyrimidine nucleotide biosynthesis pathway. The sequence is that of Aspartate carbamoyltransferase catalytic subunit from Methanosarcina barkeri (strain Fusaro / DSM 804).